Reading from the N-terminus, the 211-residue chain is Large ribosomal subunit protein uL4 (211 aa).

The segment at 40-85 (QQAHSRQGTASTLTRSEVRGGGRKPYKQKGTGRARQGSVRTPLRPG) is disordered. The segment covering 41–54 (QAHSRQGTASTLTR) has biased composition (polar residues). The span at 60-71 (GGRKPYKQKGTG) shows a compositional bias: basic residues.

The protein belongs to the universal ribosomal protein uL4 family. In terms of assembly, part of the 50S ribosomal subunit.

One of the primary rRNA binding proteins, this protein initially binds near the 5'-end of the 23S rRNA. It is important during the early stages of 50S assembly. It makes multiple contacts with different domains of the 23S rRNA in the assembled 50S subunit and ribosome. Functionally, forms part of the polypeptide exit tunnel. The chain is Large ribosomal subunit protein uL4 from Synechococcus sp. (strain CC9311).